A 527-amino-acid chain; its full sequence is Arginine--tRNA ligase (527 aa).

Positions 112-122 (ANPTGPLHIGH) match the 'HIGH' region motif.

The protein belongs to the class-I aminoacyl-tRNA synthetase family. Monomer.

It localises to the cytoplasm. It catalyses the reaction tRNA(Arg) + L-arginine + ATP = L-arginyl-tRNA(Arg) + AMP + diphosphate. The sequence is that of Arginine--tRNA ligase from Nitratiruptor sp. (strain SB155-2).